We begin with the raw amino-acid sequence, 118 residues long: ATP synthase subunit g, mitochondrial (118 aa).

Belongs to the ATPase g subunit family. In terms of assembly, F-type ATPases have 2 components, CF(1) - the catalytic core - and CF(0) - the membrane proton channel.

The protein resides in the mitochondrion membrane. Its function is as follows. Mitochondrial membrane ATP synthase (F(1)F(0) ATP synthase or Complex V) produces ATP from ADP in the presence of a proton gradient across the membrane which is generated by electron transport complexes of the respiratory chain. F-type ATPases consist of two structural domains, F(1) - containing the extramembraneous catalytic core, and F(0) - containing the membrane proton channel, linked together by a central stalk and a peripheral stalk. During catalysis, ATP synthesis in the catalytic domain of F(1) is coupled via a rotary mechanism of the central stalk subunits to proton translocation. Part of the complex F(0) domain. Minor subunit located with subunit a in the membrane. The protein is ATP synthase subunit g, mitochondrial (atp20) of Schizosaccharomyces pombe (strain 972 / ATCC 24843) (Fission yeast).